Here is a 503-residue protein sequence, read N- to C-terminus: Cytochrome P450 11B1, mitochondrial (503 aa).

The transit peptide at 1–24 (MALWAKARVWMAGPWLSLHRARPL) directs the protein to the mitochondrion. Cys-450 contacts heme.

The protein belongs to the cytochrome P450 family. It depends on heme as a cofactor.

It localises to the mitochondrion inner membrane. It catalyses the reaction a steroid + 2 reduced [adrenodoxin] + O2 + 2 H(+) = an 11beta-hydroxysteroid + 2 oxidized [adrenodoxin] + H2O. The catalysed reaction is 11-deoxycortisol + 2 reduced [adrenodoxin] + O2 + 2 H(+) = cortisol + 2 oxidized [adrenodoxin] + H2O. It carries out the reaction 21-hydroxyprogesterone + 2 reduced [adrenodoxin] + O2 + 2 H(+) = corticosterone + 2 oxidized [adrenodoxin] + H2O. The enzyme catalyses corticosterone + 2 reduced [adrenodoxin] + O2 + 2 H(+) = 18-hydroxycorticosterone + 2 oxidized [adrenodoxin] + H2O. It catalyses the reaction 18-hydroxycorticosterone + 2 reduced [adrenodoxin] + O2 + 2 H(+) = aldosterone + 2 oxidized [adrenodoxin] + 2 H2O. The catalysed reaction is 21-hydroxyprogesterone + 2 reduced [adrenodoxin] + O2 + 2 H(+) = 19-hydroxy-11-deoxycorticosterone + 2 oxidized [adrenodoxin] + H2O. It carries out the reaction 19-hydroxy-11-deoxycorticosterone + 2 reduced [adrenodoxin] + O2 + 2 H(+) = 19-oxo-11-deoxycorticosterone + 2 oxidized [adrenodoxin] + 2 H2O. Its pathway is steroid biosynthesis; glucocorticoid biosynthesis. It participates in steroid hormone biosynthesis. A cytochrome P450 monooxygenase that catalyzes the biosynthesis of aldosterone and other adrenal corticoids. Differing from other species (such as human, rat and mice), it is able to catalyze three sequential oxidative reactions of 11-deoxycorticosterone (21-hydroxyprogesterone), namely 11-beta hydroxylation, followed by two successive oxidations at C18 yielding 18-hydroxy and then 18-oxo intermediates, and ending with the formation of aldosterone. Steroid 11beta, 18- and 19-hydroxylase. Mechanistically, uses molecular oxygen inserting one oxygen atom into a substrate and reducing the second into a water molecule. Two electrons are provided by NADPH via a two-protein mitochondrial transfer system comprising flavoprotein FDXR (adrenodoxin/ferredoxin reductase) and nonheme iron-sulfur protein FDX1 or FDX2 (adrenodoxin/ferredoxin). In Ovis aries (Sheep), this protein is Cytochrome P450 11B1, mitochondrial (CYP11B1).